Reading from the N-terminus, the 146-residue chain is MGRFIFVSFGLLVVFLSLSGTGADCPPDWSSYEGNCYLVVKEKKTWAEAQKFCTEQRKECHLVSFHSAEEVDFVVSKTFPILSYDLVWIGLNNIWNDCMLEWSDGTKLTYKAWSGIPECIISKTSDNQWLSRACSRTQPFVCKFQA.

A signal peptide spans 1-23; sequence MGRFIFVSFGLLVVFLSLSGTGA. 3 disulfides stabilise this stretch: Cys-25/Cys-36, Cys-53/Cys-142, and Cys-119/Cys-134. The C-type lectin domain occupies 32-143; it reads YEGNCYLVVK…CSRTQPFVCK (112 aa).

It belongs to the snaclec family. In terms of assembly, heterodimer of subunits alpha and beta; disulfide-linked. Expressed by the venom gland.

It is found in the secreted. In terms of biological role, is a potent glycoprotein Ibalpha (GP1BA) antagonist. Concentration-dependently inhibits botrocetin-, ristocetin- and low dose thrombin-induced platelet aggregation. Inhibits platelet adhesion only through inhibiting the vWF interaction with GP1BA, but has minimal effect on other platelet receptors, such as alpha-IIb/beta-3 (ITGA2B/ITGB3) or alpha-2/beta-1 (ITGA2/ITGB1). Causes an instant severe thrombocytopenia in rats and is not lethal to mice. The chain is Snaclec agkicetin-C subunit beta from Deinagkistrodon acutus (Hundred-pace snake).